The chain runs to 406 residues: Tyrosine--tRNA ligase (406 aa).

Tyr35 serves as a coordination point for L-tyrosine. Positions 40 to 49 (PTGPSLHIGH) match the 'HIGH' region motif. L-tyrosine-binding residues include Tyr168 and Gln172. The 'KMSKS' region motif lies at 228–232 (KMGKS). Lys231 provides a ligand contact to ATP. Positions 339–405 (IGIIDLFAEA…GKKRFMRIIF (67 aa)) constitute an S4 RNA-binding domain.

It belongs to the class-I aminoacyl-tRNA synthetase family. TyrS type 1 subfamily. In terms of assembly, homodimer.

It localises to the cytoplasm. The catalysed reaction is tRNA(Tyr) + L-tyrosine + ATP = L-tyrosyl-tRNA(Tyr) + AMP + diphosphate + H(+). In terms of biological role, catalyzes the attachment of tyrosine to tRNA(Tyr) in a two-step reaction: tyrosine is first activated by ATP to form Tyr-AMP and then transferred to the acceptor end of tRNA(Tyr). This chain is Tyrosine--tRNA ligase, found in Treponema denticola (strain ATCC 35405 / DSM 14222 / CIP 103919 / JCM 8153 / KCTC 15104).